We begin with the raw amino-acid sequence, 132 residues long: AEPEDAIHYRQSALSVMGWQMGPMGAMAQGDIEYDADEFATRANNLAAVAHLPWEGFTEGTLQGDDHGVETDALADIGDDWEGFEERQETFKQEAATLAQMVDDGEEFSALRRQVGAVGKSCKGCHDDFRAE.

6 residues coordinate heme c: Arg10, Gln11, Asp65, Cys122, Cys125, and His126.

In terms of processing, binds 1 heme c group covalently per subunit.

Cytochrome c' is the most widely occurring bacterial c-type cytochrome. Cytochromes c' are high-spin proteins and the heme has no sixth ligand. Their exact function is not known. The chain is Cytochrome c' from Halomonas halodenitrificans (strain ATCC 12084 / NCIMB 8669) (Paracoccus halodenitrificans).